Here is a 449-residue protein sequence, read N- to C-terminus: MIRFRRRTCITLSIFIFLVCLIMAGLKHLRPENAAFGSPFGLGLFPGFHRASVLEKIPDSENHLKGNTVTETNTLPAPKDKVYQLDMEEFPPPNYDLHIFYYTWYGNPQFDGKYIHWNHPLLKHWDAKIANSFPLGKHNPPDDVGANFYPELGPYSSRDPSVIDAHMKQIRSSSVGVISVSWYPPGISDDNGEPTDDFIPSILDKAHSYGLKVNFHIEPYRNRDDYSLRNNVVYIIDKYGSHPAFYKYKTDNGRTLPMFYIYDSYITTPGTWANLLTSSGSQSIRNTPYDGIFMALLVEEKHKHDILRGGFDGFYTYFATNGFSYGSSHQHWSSLKEFCNTNNLLFIPSVGPGYIDTSIRPWNFQNTRNRINGKYYETAINAALLVRPKIISITSFNEWHEGTQIEAAIPKKTAQMKYEDYLPHKPNIYLELTRKWSEKYMKEKEHWLV.

Residues 1–8 lie on the Cytoplasmic side of the membrane; that stretch reads MIRFRRRT. Residues 9 to 29 traverse the membrane as a helical; Signal-anchor for type II membrane protein segment; the sequence is CITLSIFIFLVCLIMAGLKHL. Topologically, residues 30–449 are lumenal; that stretch reads RPENAAFGSP…YMKEKEHWLV (420 aa). Positions 59–449 are catalytic; the sequence is DSENHLKGNT…YMKEKEHWLV (391 aa).

The protein belongs to the glycosyl hydrolase 99 family.

It localises to the golgi apparatus membrane. The catalysed reaction is N-{alpha-Glc-(1-&gt;3)-alpha-Man-(1-&gt;2)-alpha-Man-(1-&gt;2)-alpha-Man-(1-&gt;3)-[alpha-Man-(1-&gt;2)-alpha-Man-(1-&gt;3)-[alpha-Man-(1-&gt;2)-alpha-Man-(1-&gt;6)]-alpha-Man-(1-&gt;6)]-beta-Man-(1-&gt;4)-beta-GlcNAc-(1-&gt;4)-beta-GlcNAc}-L-asparaginyl-[protein] + H2O = alpha-D-glucosyl-(1-&gt;3)-D-mannopyranose + N(4)-{alpha-D-Man-(1-&gt;2)-alpha-D-Man-(1-&gt;3)-[alpha-D-Man-(1-&gt;2)-alpha-D-Man-(1-&gt;3)-[alpha-D-Man-(1-&gt;2)-alpha-D-Man-(1-&gt;6)]-alpha-D-Man-(1-&gt;6)]-beta-D-Man-(1-&gt;4)-beta-D-GlaNAc-(1-&gt;4)-beta-D-GlcNAc}-L-asparaginyl-[protein] (N-glucan mannose isomer 8A1,2,3B1,2). The protein is Glycoprotein endo-alpha-1,2-mannosidase (manea) of Xenopus laevis (African clawed frog).